A 163-amino-acid chain; its full sequence is Small ribosomal subunit protein bS18c (163 aa).

2 disordered regions span residues 1 to 52 (MYIS…IGPG) and 144 to 163 (NLRN…SSDC). Over residues 7-48 (PFRKSKQPFRKSKQTFHKSKQPFRKFKQPFRKSKQPFRRRSR) the composition is skewed to basic residues.

The protein belongs to the bacterial ribosomal protein bS18 family. In terms of assembly, part of the 30S ribosomal subunit.

It localises to the plastid. It is found in the chloroplast. This is Small ribosomal subunit protein bS18c from Sorghum bicolor (Sorghum).